The primary structure comprises 157 residues: Isotocin-neurophysin IT 1 (157 aa).

Positions 1–20 (MFGTSVSALCLLFLLSVCTA) are cleaved as a signal peptide. Residues Cys21 and Cys26 are joined by a disulfide bond. Gly29 is subject to Glycine amide. 7 disulfides stabilise this stretch: Cys42–Cys86, Cys45–Cys59, Cys53–Cys76, Cys60–Cys66, Cys93–Cys106, Cys100–Cys118, and Cys107–Cys112.

Belongs to the vasopressin/oxytocin family. Seven disulfide bonds are present in neurophysin.

It localises to the secreted. Its function is as follows. Isotocin causes contraction of smooth muscles. This is Isotocin-neurophysin IT 1 from Oncorhynchus keta (Chum salmon).